The primary structure comprises 98 residues: NADH-ubiquinone oxidoreductase chain 4L (98 aa).

The next 3 helical transmembrane spans lie at 1–21, 29–49, and 61–81; these read MTPTYMNIMLAFTISLLGMLT, SLLCLEGMMMSLFIMTTLIAL, and IILLVFAACEAAVGLALLVSI.

Belongs to the complex I subunit 4L family. As to quaternary structure, core subunit of respiratory chain NADH dehydrogenase (Complex I) which is composed of 45 different subunits.

Its subcellular location is the mitochondrion inner membrane. The enzyme catalyses a ubiquinone + NADH + 5 H(+)(in) = a ubiquinol + NAD(+) + 4 H(+)(out). Core subunit of the mitochondrial membrane respiratory chain NADH dehydrogenase (Complex I) which catalyzes electron transfer from NADH through the respiratory chain, using ubiquinone as an electron acceptor. Part of the enzyme membrane arm which is embedded in the lipid bilayer and involved in proton translocation. In Macaca pagensis (Mentawai macaque), this protein is NADH-ubiquinone oxidoreductase chain 4L (MT-ND4L).